The following is a 102-amino-acid chain: Defensin (102 aa).

The signal sequence occupies residues 1-25 (MKCATIVCTIAVVLAATLLNGSVQA). A propeptide spanning residues 26 to 62 (APQEEAALSGGANLNTLLDELPEETHHAALENYRAKR) is cleaved from the precursor. Intrachain disulfides connect Cys65/Cys92, Cys78/Cys98, and Cys82/Cys100.

It belongs to the invertebrate defensin family. Type 1 subfamily.

The protein resides in the secreted. Responsible for the anti Gram-positive activity of immune hemolymph. The chain is Defensin (Def1) from Anopheles gambiae (African malaria mosquito).